Reading from the N-terminus, the 290-residue chain is Ribosomal RNA small subunit methyltransferase A (290 aa).

6 residues coordinate S-adenosyl-L-methionine: Asn27, Leu29, Gly54, Glu75, Asp100, and Asn125.

This sequence belongs to the class I-like SAM-binding methyltransferase superfamily. rRNA adenine N(6)-methyltransferase family. RsmA subfamily.

Its subcellular location is the cytoplasm. The catalysed reaction is adenosine(1518)/adenosine(1519) in 16S rRNA + 4 S-adenosyl-L-methionine = N(6)-dimethyladenosine(1518)/N(6)-dimethyladenosine(1519) in 16S rRNA + 4 S-adenosyl-L-homocysteine + 4 H(+). Its function is as follows. Specifically dimethylates two adjacent adenosines (A1518 and A1519) in the loop of a conserved hairpin near the 3'-end of 16S rRNA in the 30S particle. May play a critical role in biogenesis of 30S subunits. This chain is Ribosomal RNA small subunit methyltransferase A, found in Streptococcus sanguinis (strain SK36).